The sequence spans 140 residues: Auxin-responsive protein IAA26 (140 aa).

A disordered region spans residues 1–40; sequence MASYGDDGVELTELTLGPPGASARRARRGRKNGHPPPSSS. The EAR-like (transcriptional repression) motif lies at 14 to 18; the sequence is LTLGP. Positions 24 to 33 are enriched in basic residues; it reads RRARRGRKNG. The PB1 domain occupies 45–130; it reads AYFVKVSMDG…SCKRMRVMRA (86 aa).

This sequence belongs to the Aux/IAA family. Homodimers and heterodimers. In terms of tissue distribution, expressed in roots, seedlings and flowers.

The protein localises to the nucleus. In terms of biological role, aux/IAA proteins are short-lived transcriptional factors that function as repressors of early auxin response genes at low auxin concentrations. This chain is Auxin-responsive protein IAA26 (IAA26), found in Oryza sativa subsp. japonica (Rice).